A 704-amino-acid polypeptide reads, in one-letter code: Mannan-binding lectin serine protease 1 (704 aa).

The first 24 residues, 1 to 24, serve as a signal peptide directing secretion; that stretch reads MRFLSFWRLLLYHALCLALPEVSA. The CUB 1 domain occupies 25–143; sequence HTVELNEMFG…TGFDAHYMAV (119 aa). The interval 25–189 is homodimerization; that stretch reads HTVELNEMFG…HTDNRTCRVE (165 aa). The interaction with MBL2 stretch occupies residues 25 to 189; the sequence is HTVELNEMFG…HTDNRTCRVE (165 aa). The interval 25–283 is interaction with FCN2; that stretch reads HTVELNEMFG…STQTHSVQIL (259 aa). Residues 25 to 305 are interaction with MBL1; it reads HTVELNEMFG…RLSYRAAGNE (281 aa). Asn-54 is a glycosylation site (N-linked (GlcNAc...) asparagine). Residues Glu-73, Asp-81, Asp-126, Ser-128, Asp-144, Val-145, and Glu-147 each coordinate Ca(2+). Cys-78 and Cys-96 are disulfide-bonded. The region spanning 144-187 is the EGF-like; calcium-binding domain; the sequence is DVDECKEREDEELSCDHYCHNYIGGYYCSCRFGYILHTDNRTCR. Intrachain disulfides connect Cys-148–Cys-162, Cys-158–Cys-171, Cys-173–Cys-186, and Cys-190–Cys-217. Residues Asn-164, Tyr-165, and Gly-168 each contribute to the Ca(2+) site. The residue at position 164 (Asn-164) is a (3R)-3-hydroxyasparagine. Residue Asn-183 is glycosylated (N-linked (GlcNAc...) asparagine). A CUB 2 domain is found at 190–302; the sequence is CSGNLFTQRT…RGWRLSYRAA (113 aa). Ca(2+) is bound by residues Glu-240, Asp-250, Asp-287, and Ser-289. A disulfide bridge links Cys-247 with Cys-265. Sushi domains lie at 304 to 369 and 370 to 439; these read NECP…TCKI and VDCG…TCLP. 8 disulfides stabilise this stretch: Cys-306–Cys-354, Cys-334–Cys-367, Cys-372–Cys-419, Cys-402–Cys-437, Cys-441–Cys-577, Cys-480–Cys-496, Cys-619–Cys-636, and Cys-647–Cys-677. Residues Asn-390 and Asn-412 are each glycosylated (N-linked (GlcNAc...) asparagine). The 248-residue stretch at 454–701 folds into the Peptidase S1 domain; that stretch reads IFNGRPAQKG…NKDWIQRITG (248 aa). Active-site charge relay system residues include His-495 and Asp-557. Catalysis depends on Ser-651, which acts as the Charge relay system.

It belongs to the peptidase S1 family. As to quaternary structure, homodimer. Interacts with the oligomeric lectins MBL2, FCN2 and FCN3; triggers the lectin pathway of complement through activation of C3. Interacts with SERPING1. Interacts with COLEC11; probably triggers the lectin pathway of complement. Post-translationally, the iron and 2-oxoglutarate dependent 3-hydroxylation of aspartate and asparagine is (R) stereospecific within EGF domains. N-glycosylated. Some N-linked glycan are of the complex-type. In terms of processing, autoproteolytic processing of the proenzyme produces the active enzyme composed on the heavy and the light chain held together by a disulfide bond. Isoform 1 but not isoform 2 is activated through autoproteolytic processing. Protein of the plasma which is primarily expressed by liver.

It localises to the secreted. Inhibited by SERPING1 and A2M. Its function is as follows. Functions in the lectin pathway of complement, which performs a key role in innate immunity by recognizing pathogens through patterns of sugar moieties and neutralizing them. The lectin pathway is triggered upon binding of mannan-binding lectin (MBL) and ficolins to sugar moieties which leads to activation of the associated proteases MASP1 and MASP2. Functions as an endopeptidase and may activate MASP2 or C2 or directly activate C3 the key component of complement reaction. Isoform 2 may have an inhibitory effect on the activation of the lectin pathway of complement or may cleave IGFBP5. Also plays a role in development. This chain is Mannan-binding lectin serine protease 1 (Masp1), found in Mus musculus (Mouse).